The chain runs to 380 residues: Ribosomal RNA large subunit methyltransferase G (380 aa).

It belongs to the methyltransferase superfamily. RlmG family.

The protein resides in the cytoplasm. The catalysed reaction is guanosine(1835) in 23S rRNA + S-adenosyl-L-methionine = N(2)-methylguanosine(1835) in 23S rRNA + S-adenosyl-L-homocysteine + H(+). Its function is as follows. Specifically methylates the guanine in position 1835 (m2G1835) of 23S rRNA. The protein is Ribosomal RNA large subunit methyltransferase G of Aeromonas hydrophila subsp. hydrophila (strain ATCC 7966 / DSM 30187 / BCRC 13018 / CCUG 14551 / JCM 1027 / KCTC 2358 / NCIMB 9240 / NCTC 8049).